Here is a 693-residue protein sequence, read N- to C-terminus: Zinc finger BED domain-containing protein 5 (693 aa).

Residues 108 to 164 form a BED-type zinc finger; that stretch reads RKYDESYLSFGFTYFGNRDAPHAQCVLCKKILSNSSLAPSKLRRHLETKHAAYKDKD. Zn(2+) contacts are provided by cysteine 132, cysteine 135, histidine 152, and histidine 157.

The chain is Zinc finger BED domain-containing protein 5 (ZBED5) from Homo sapiens (Human).